The sequence spans 379 residues: Protein RecA (379 aa).

79–86 (GPESSGKT) contacts ATP.

This sequence belongs to the RecA family.

The protein localises to the cytoplasm. Functionally, can catalyze the hydrolysis of ATP in the presence of single-stranded DNA, the ATP-dependent uptake of single-stranded DNA by duplex DNA, and the ATP-dependent hybridization of homologous single-stranded DNAs. It interacts with LexA causing its activation and leading to its autocatalytic cleavage. The sequence is that of Protein RecA from Streptococcus thermophilus.